The following is a 127-amino-acid chain: Protein ApaG (127 aa).

Residues 3–127 (DTNKYRIEVQ…FVLASPRALH (125 aa)) form the ApaG domain.

This chain is Protein ApaG, found in Dechloromonas aromatica (strain RCB).